A 194-amino-acid polypeptide reads, in one-letter code: Inosine triphosphate pyrophosphatase (194 aa).

8 to 13 provides a ligand contact to ITP; the sequence is TGNANK. Position 47 (Glu-47) interacts with Mg(2+). ITP-binding positions include Lys-59, 75 to 76, Lys-92, 151 to 154, Lys-174, and 179 to 180; these read DT, FGWD, and HR.

It belongs to the HAM1 NTPase family. In terms of assembly, homodimer. It depends on Mg(2+) as a cofactor. Mn(2+) is required as a cofactor.

Its subcellular location is the cytoplasm. It is found in the nucleus. It catalyses the reaction ITP + H2O = IMP + diphosphate + H(+). The enzyme catalyses dITP + H2O = dIMP + diphosphate + H(+). It carries out the reaction XTP + H2O = XMP + diphosphate + H(+). Its function is as follows. Pyrophosphatase that hydrolyzes non-canonical purine nucleotides such as inosine triphosphate (ITP), deoxyinosine triphosphate (dITP) or xanthosine 5'-triphosphate (XTP) to their respective monophosphate derivatives. The enzyme does not distinguish between the deoxy- and ribose forms. Probably excludes non-canonical purines from RNA and DNA precursor pools, thus preventing their incorporation into RNA and DNA and avoiding chromosomal lesions. The sequence is that of Inosine triphosphate pyrophosphatase from Scheffersomyces stipitis (strain ATCC 58785 / CBS 6054 / NBRC 10063 / NRRL Y-11545) (Yeast).